The following is a 321-amino-acid chain: Nacrein-like protein (321 aa).

Positions 1–319 (RGPKNWCKVH…NKNVIVYRNH (319 aa)) constitute an Alpha-carbonic anhydrase domain. Residue H58 is the Proton acceptor of the active site.

It belongs to the alpha-carbonic anhydrase family. As to expression, component of the organic matrix of calcified shell layers like nacre and prisms.

Its subcellular location is the secreted. The sequence is that of Nacrein-like protein from Mytilus californianus (California mussel).